The sequence spans 306 residues: MEHSRPYGGRKRMSLGNILGDPFALATISISLLAWFITFISCVIAQVQANKNKGLPDKDNPDGNFPPFAWWAVVYSLFLIVGVVIVVASDAIQTYHVAVTGYLAGGMVLVTSGVNSLVYSKNGAREAAAAGFILLSMVVIVWIFYFGSTPSSTPRAFLDSFALSKDSGAMHNQAMNGYGGTGRPETSNSVQPPQMYTSAQLNGFENPSPVGGASQAPTAPTMPTYGNNTMQPNNKSNDEEVLPPIDYPYQAKAIYSYEANPSDANEISFSKHEILDVSDVSGRWWQARRRGTNEIGIAPSNYLILL.

Residues 1 to 23 (MEHSRPYGGRKRMSLGNILGDPF) lie on the Cytoplasmic side of the membrane. A helical transmembrane segment spans residues 24–44 (ALATISISLLAWFITFISCVI). Residues 45-67 (AQVQANKNKGLPDKDNPDGNFPP) are Extracellular-facing. A helical transmembrane segment spans residues 68–88 (FAWWAVVYSLFLIVGVVIVVA). Residues 89–96 (SDAIQTYH) are Cytoplasmic-facing. A helical membrane pass occupies residues 97 to 117 (VAVTGYLAGGMVLVTSGVNSL). Topologically, residues 118 to 126 (VYSKNGARE) are extracellular. The helical transmembrane segment at 127-147 (AAAAGFILLSMVVIVWIFYFG) threads the bilayer. Topologically, residues 148-306 (STPSSTPRAF…IAPSNYLILL (159 aa)) are cytoplasmic. Residues 204-242 (FENPSPVGGASQAPTAPTMPTYGNNTMQPNNKSNDEEVL) form a disordered region. Positions 224-235 (TYGNNTMQPNNK) are enriched in polar residues. Positions 246–306 (DYPYQAKAIY…IAPSNYLILL (61 aa)) constitute an SH3 domain.

The protein belongs to the SHO1 family. As to quaternary structure, forms homooligomers.

The protein resides in the cell membrane. Functionally, plasma membrane osmosensor that activates the high osmolarity glycerol (HOG) MAPK signaling pathway in response to high osmolarity. Affects fungal virulence. This chain is High osmolarity signaling protein MOS1 (MOS1), found in Metarhizium robertsii (strain ARSEF 23 / ATCC MYA-3075) (Metarhizium anisopliae (strain ARSEF 23)).